We begin with the raw amino-acid sequence, 259 residues long: Phosphoribosylaminoimidazole-succinocarboxamide synthase (259 aa).

This sequence belongs to the SAICAR synthetase family.

It carries out the reaction 5-amino-1-(5-phospho-D-ribosyl)imidazole-4-carboxylate + L-aspartate + ATP = (2S)-2-[5-amino-1-(5-phospho-beta-D-ribosyl)imidazole-4-carboxamido]succinate + ADP + phosphate + 2 H(+). Its pathway is purine metabolism; IMP biosynthesis via de novo pathway; 5-amino-1-(5-phospho-D-ribosyl)imidazole-4-carboxamide from 5-amino-1-(5-phospho-D-ribosyl)imidazole-4-carboxylate: step 1/2. The protein is Phosphoribosylaminoimidazole-succinocarboxamide synthase of Zymomonas mobilis subsp. mobilis (strain ATCC 31821 / ZM4 / CP4).